The chain runs to 275 residues: NH(3)-dependent NAD(+) synthetase (275 aa).

46–53 (GISGGQDS) provides a ligand contact to ATP. Asp-52 lines the Mg(2+) pocket. A deamido-NAD(+)-binding site is contributed by Arg-140. Thr-160 contributes to the ATP binding site. Position 165 (Glu-165) interacts with Mg(2+). Residues Lys-173 and Asp-180 each contribute to the deamido-NAD(+) site. ATP contacts are provided by Lys-189 and Thr-211. Residue 260-261 (HK) participates in deamido-NAD(+) binding.

It belongs to the NAD synthetase family. As to quaternary structure, homodimer.

The enzyme catalyses deamido-NAD(+) + NH4(+) + ATP = AMP + diphosphate + NAD(+) + H(+). It functions in the pathway cofactor biosynthesis; NAD(+) biosynthesis; NAD(+) from deamido-NAD(+) (ammonia route): step 1/1. In terms of biological role, catalyzes the ATP-dependent amidation of deamido-NAD to form NAD. Uses ammonia as a nitrogen source. The protein is NH(3)-dependent NAD(+) synthetase of Enterobacter sp. (strain 638).